We begin with the raw amino-acid sequence, 300 residues long: Succinate--CoA ligase [ADP-forming] subunit alpha (300 aa).

CoA is bound by residues 17-20, Lys43, and 96-98; these read TGST and ITE. Residue Tyr159 participates in substrate binding. His247 functions as the Tele-phosphohistidine intermediate in the catalytic mechanism.

It belongs to the succinate/malate CoA ligase alpha subunit family. In terms of assembly, heterotetramer of two alpha and two beta subunits.

The enzyme catalyses succinate + ATP + CoA = succinyl-CoA + ADP + phosphate. It carries out the reaction GTP + succinate + CoA = succinyl-CoA + GDP + phosphate. The protein operates within carbohydrate metabolism; tricarboxylic acid cycle; succinate from succinyl-CoA (ligase route): step 1/1. Its function is as follows. Succinyl-CoA synthetase functions in the citric acid cycle (TCA), coupling the hydrolysis of succinyl-CoA to the synthesis of either ATP or GTP and thus represents the only step of substrate-level phosphorylation in the TCA. The alpha subunit of the enzyme binds the substrates coenzyme A and phosphate, while succinate binding and nucleotide specificity is provided by the beta subunit. The sequence is that of Succinate--CoA ligase [ADP-forming] subunit alpha from Bacillus subtilis (strain 168).